The following is a 505-amino-acid chain: SusD-like protein P2 (505 aa).

An N-terminal signal peptide occupies residues 1–17 (MKKYKITFIVLLLTLVG). The N-palmitoyl cysteine moiety is linked to residue Cys-18. Cys-18 is lipidated: S-diacylglycerol cysteine.

Belongs to the SusD family.

It localises to the cell outer membrane. Its function is as follows. Polysaccharide-binding protein probably involved in ulvan degradation. Ulvan is the main polysaccharide component of the Ulvales (green seaweed) cell wall. It is composed of disaccharide building blocks comprising 3-sulfated rhamnose (Rha3S) linked to D-glucuronic acid (GlcA), L-iduronic acid (IduA), or D-xylose (Xyl). The SusD-like protein may mediate ulvan oligomer-binding before transport in the periplasm for further degradation. In Formosa agariphila (strain DSM 15362 / KCTC 12365 / LMG 23005 / KMM 3901 / M-2Alg 35-1), this protein is SusD-like protein P2.